A 223-amino-acid polypeptide reads, in one-letter code: MSAKIGVITFPGTLDDVDAARAARIAGAEVISLWHADEDLKGVDAVVVPGGFSYGDYLRTGAISALAPVMQSVIEQAGKGMPVLGICNGFQILTEARLLPGALTRNKGLHFHCVDAHLVVENNTTAWTNTLEKGQQILIPAKHGEGRFQADAETIAQLEGEGRVVFRYTDNFNGSVNDIAGITNETGRIVGLMPHPEHAVEKLTGPSIDGLELFLSAVGTIAA.

Residues 4–223 (KIGVITFPGT…FLSAVGTIAA (220 aa)) enclose the Glutamine amidotransferase type-1 domain. The active-site Nucleophile is the cysteine 87. Residues histidine 195 and glutamate 197 contribute to the active site.

Part of the FGAM synthase complex composed of 1 PurL, 1 PurQ and 2 PurS subunits.

Its subcellular location is the cytoplasm. It catalyses the reaction N(2)-formyl-N(1)-(5-phospho-beta-D-ribosyl)glycinamide + L-glutamine + ATP + H2O = 2-formamido-N(1)-(5-O-phospho-beta-D-ribosyl)acetamidine + L-glutamate + ADP + phosphate + H(+). The catalysed reaction is L-glutamine + H2O = L-glutamate + NH4(+). The protein operates within purine metabolism; IMP biosynthesis via de novo pathway; 5-amino-1-(5-phospho-D-ribosyl)imidazole from N(2)-formyl-N(1)-(5-phospho-D-ribosyl)glycinamide: step 1/2. Its function is as follows. Part of the phosphoribosylformylglycinamidine synthase complex involved in the purines biosynthetic pathway. Catalyzes the ATP-dependent conversion of formylglycinamide ribonucleotide (FGAR) and glutamine to yield formylglycinamidine ribonucleotide (FGAM) and glutamate. The FGAM synthase complex is composed of three subunits. PurQ produces an ammonia molecule by converting glutamine to glutamate. PurL transfers the ammonia molecule to FGAR to form FGAM in an ATP-dependent manner. PurS interacts with PurQ and PurL and is thought to assist in the transfer of the ammonia molecule from PurQ to PurL. The protein is Phosphoribosylformylglycinamidine synthase subunit PurQ of Corynebacterium glutamicum (strain ATCC 13032 / DSM 20300 / JCM 1318 / BCRC 11384 / CCUG 27702 / LMG 3730 / NBRC 12168 / NCIMB 10025 / NRRL B-2784 / 534).